The following is a 521-amino-acid chain: Protein NRT1/ PTR FAMILY 4.2 (521 aa).

A run of 12 helical transmembrane segments spans residues 30–50 (IVCVVVMMENIVFIANGFNFV), 65–85 (ANMVTNFMGTSFLLTLFGGFI), 89–109 (FVTHFTTFIVFCCIELMGLIL), 133–153 (AILFTGLYAMAIGTGGLKASL), 172–192 (FFDWLYFSICSGCLLAVTVVL), 204–224 (FNISVGILATALCIFTVGLPF), 297–317 (FLGLLPIFGSTIVMSCCVAQL), 338–358 (IPVPSLTAIPLIFMLLSIPLY), 381–401 (IGLGLALSSVSMAVSAIVEAK), 413–433 (ISVLWLVFQYLMLSVSDMLTL), 451–471 (ISTALGWCSTALGFFLSTTLV), and 498–518 (LFYVLLCVLNTLNLLNYIFWA).

The protein belongs to the major facilitator superfamily. Proton-dependent oligopeptide transporter (POT/PTR) (TC 2.A.17) family. As to expression, expressed in siliques.

Its subcellular location is the membrane. Involved in abscisic acid transport. The polypeptide is Protein NRT1/ PTR FAMILY 4.2 (NPF4.2) (Arabidopsis thaliana (Mouse-ear cress)).